A 740-amino-acid polypeptide reads, in one-letter code: Elongation factor 2 (740 aa).

In terms of domain architecture, tr-type G spans 18 to 263 (EQVRNIGIIA…MVVRWVPNPR (246 aa)). GTP contacts are provided by residues 27–34 (AHVDHGKT), 93–97 (DTPGH), and 147–150 (NKVD). Histidine 606 is subject to Diphthamide.

It belongs to the TRAFAC class translation factor GTPase superfamily. Classic translation factor GTPase family. EF-G/EF-2 subfamily.

The protein localises to the cytoplasm. In terms of biological role, catalyzes the GTP-dependent ribosomal translocation step during translation elongation. During this step, the ribosome changes from the pre-translocational (PRE) to the post-translocational (POST) state as the newly formed A-site-bound peptidyl-tRNA and P-site-bound deacylated tRNA move to the P and E sites, respectively. Catalyzes the coordinated movement of the two tRNA molecules, the mRNA and conformational changes in the ribosome. The protein is Elongation factor 2 of Ignicoccus hospitalis (strain KIN4/I / DSM 18386 / JCM 14125).